Reading from the N-terminus, the 205-residue chain is MIGMLRGHVESVDAVSAIIEVGGVGYEVRMPSADLASMHAGQEIKVYTSLNVSQDAITLFGFGTLASKRMFLQLQKVSGIGPKVALSLLSTLPPDRLARAVADGDATALAKAPGLGKKGAQKIILELKGSIDLSQIEGSSATASTPEDTGAEQVVEGLMSLGWHQQDAAHAVQTVCADNQIETPLNAKDVPRVLKLALTSLDRGR.

The domain I stretch occupies residues 1-63 (MIGMLRGHVE…QDAITLFGFG (63 aa)). A domain II region spans residues 64–142 (TLASKRMFLQ…LSQIEGSSAT (79 aa)). Residues 143–145 (AST) form a flexible linker region. The interval 146–205 (PEDTGAEQVVEGLMSLGWHQQDAAHAVQTVCADNQIETPLNAKDVPRVLKLALTSLDRGR) is domain III.

The protein belongs to the RuvA family. As to quaternary structure, homotetramer. Forms an RuvA(8)-RuvB(12)-Holliday junction (HJ) complex. HJ DNA is sandwiched between 2 RuvA tetramers; dsDNA enters through RuvA and exits via RuvB. An RuvB hexamer assembles on each DNA strand where it exits the tetramer. Each RuvB hexamer is contacted by two RuvA subunits (via domain III) on 2 adjacent RuvB subunits; this complex drives branch migration. In the full resolvosome a probable DNA-RuvA(4)-RuvB(12)-RuvC(2) complex forms which resolves the HJ.

It localises to the cytoplasm. In terms of biological role, the RuvA-RuvB-RuvC complex processes Holliday junction (HJ) DNA during genetic recombination and DNA repair, while the RuvA-RuvB complex plays an important role in the rescue of blocked DNA replication forks via replication fork reversal (RFR). RuvA specifically binds to HJ cruciform DNA, conferring on it an open structure. The RuvB hexamer acts as an ATP-dependent pump, pulling dsDNA into and through the RuvAB complex. HJ branch migration allows RuvC to scan DNA until it finds its consensus sequence, where it cleaves and resolves the cruciform DNA. The protein is Holliday junction branch migration complex subunit RuvA of Bifidobacterium adolescentis (strain ATCC 15703 / DSM 20083 / NCTC 11814 / E194a).